We begin with the raw amino-acid sequence, 132 residues long: Phosphomevalonate dehydratase small subunit (132 aa).

The active-site Proton acceptor is the Ser62.

Belongs to the AcnX type II small subunit family. Heterodimer composed of a large subunit (PMDh-L) and a small subunit (PMDh-S).

It catalyses the reaction (R)-5-phosphomevalonate = (2E)-3-methyl-5-phosphooxypent-2-enoate + H2O. It functions in the pathway isoprenoid biosynthesis; isopentenyl diphosphate biosynthesis via mevalonate pathway. Functionally, component of a hydro-lyase that catalyzes the dehydration of mevalonate 5-phosphate (MVA5P) to form trans-anhydromevalonate 5-phosphate (tAHMP). Involved in the archaeal mevalonate (MVA) pathway, which provides fundamental precursors for isoprenoid biosynthesis, such as isopentenyl diphosphate (IPP) and dimethylallyl diphosphate (DMAPP). This chain is Phosphomevalonate dehydratase small subunit, found in Methanocella arvoryzae (strain DSM 22066 / NBRC 105507 / MRE50).